We begin with the raw amino-acid sequence, 357 residues long: Glycerol-3-phosphate dehydrogenase [NAD(P)+] (357 aa).

The NADPH site is built by Ser-30, Phe-31, Arg-51, and Lys-124. Sn-glycerol 3-phosphate contacts are provided by Lys-124 and Gly-152. An NADPH-binding site is contributed by Ala-156. Sn-glycerol 3-phosphate-binding residues include Lys-207, Asp-260, Ser-270, Arg-271, and Asn-272. Residue Lys-207 is the Proton acceptor of the active site. Residue Arg-271 participates in NADPH binding. Glu-297 contributes to the NADPH binding site.

Belongs to the NAD-dependent glycerol-3-phosphate dehydrogenase family.

The protein resides in the cytoplasm. The enzyme catalyses sn-glycerol 3-phosphate + NAD(+) = dihydroxyacetone phosphate + NADH + H(+). The catalysed reaction is sn-glycerol 3-phosphate + NADP(+) = dihydroxyacetone phosphate + NADPH + H(+). It functions in the pathway membrane lipid metabolism; glycerophospholipid metabolism. Its function is as follows. Catalyzes the reduction of the glycolytic intermediate dihydroxyacetone phosphate (DHAP) to sn-glycerol 3-phosphate (G3P), the key precursor for phospholipid synthesis. The protein is Glycerol-3-phosphate dehydrogenase [NAD(P)+] of Acinetobacter baumannii (strain AB307-0294).